The sequence spans 195 residues: Granulocyte colony-stimulating factor (195 aa).

Positions 1 to 21 (MKLMALQLLLWHIALWMVPEA) are cleaved as a signal peptide. Intrachain disulfides connect C57–C63 and C85–C95. Residue T154 is glycosylated (O-linked (GalNAc...) threonine).

This sequence belongs to the IL-6 superfamily. Monomer. In terms of processing, O-glycosylated.

Its subcellular location is the secreted. Granulocyte/macrophage colony-stimulating factors are cytokines that act in hematopoiesis by controlling the production, differentiation, and function of 2 related white cell populations of the blood, the granulocytes and the monocytes-macrophages. This CSF induces granulocytes. The polypeptide is Granulocyte colony-stimulating factor (CSF3) (Sus scrofa (Pig)).